The chain runs to 379 residues: Chaperone protein DnaJ (379 aa).

The J domain maps to 7-72 (DYYEVLGVDK…KKRSMYDQFG (66 aa)). The CR-type zinc-finger motif lies at 147-225 (GKKAELSYTR…CGGNGLERKK (79 aa)). Zn(2+) is bound by residues Cys-160, Cys-163, Cys-177, Cys-180, Cys-199, Cys-202, Cys-213, and Cys-216. CXXCXGXG motif repeat units follow at residues 160-167 (CSECHGTG), 177-184 (CPDCKGTG), 199-206 (CPTCGGEG), and 213-220 (CKKCGGNG).

Belongs to the DnaJ family. Homodimer. Zn(2+) is required as a cofactor.

It localises to the cytoplasm. Functionally, participates actively in the response to hyperosmotic and heat shock by preventing the aggregation of stress-denatured proteins and by disaggregating proteins, also in an autonomous, DnaK-independent fashion. Unfolded proteins bind initially to DnaJ; upon interaction with the DnaJ-bound protein, DnaK hydrolyzes its bound ATP, resulting in the formation of a stable complex. GrpE releases ADP from DnaK; ATP binding to DnaK triggers the release of the substrate protein, thus completing the reaction cycle. Several rounds of ATP-dependent interactions between DnaJ, DnaK and GrpE are required for fully efficient folding. Also involved, together with DnaK and GrpE, in the DNA replication of plasmids through activation of initiation proteins. The protein is Chaperone protein DnaJ of Treponema denticola (strain ATCC 35405 / DSM 14222 / CIP 103919 / JCM 8153 / KCTC 15104).